An 845-amino-acid polypeptide reads, in one-letter code: ATPase morc-1 (845 aa).

ATP-binding positions include asparagine 43, 88–90 (SAK), and 97–103 (RYGNGLK). Asparagine 43 is a binding site for Mg(2+). A coiled-coil region spans residues 284-311 (AAYNKILDEKNETVKKCEEEKALVMSEI). Position 422 (lysine 422) interacts with ATP. Disordered regions lie at residues 566–590 (LPQK…SASS) and 628–739 (KMEP…GKAV). Over residues 574-590 (SAPSSSDSQNSIRSASS) the composition is skewed to low complexity. Residues 637–646 (HDSHIAEVQR) show a composition bias toward basic and acidic residues.

In terms of assembly, predominantly forms monomers and dimers, but multimerizes to form trimers and tetramers upon DNA binding. Expressed in germline and somatic cells.

The protein resides in the nucleus. The protein localises to the nuclear body. It carries out the reaction ATP + H2O = ADP + phosphate + H(+). Its function is as follows. Binds non-specifically to DNA and forms static foci which grow by recruiting other morc-1 molecules, and thereby stimulates conformational changes and compaction of DNA, which appears to be enhanced by ATP-binding, but does not require ATP activity. Preferentially binds to long DNAs. Compacts and entraps segments of DNA by sequentially forming loops along the DNA, beginning at the free ends of single- and double-tethered DNA. Does not extrude the DNA loops on compacted double-tethered DNA. Involved in gene silencing. Plays a role in germline RNA interference (RNAi), and in particular, the silencing of endogenous small interfering RNA (endo-siRNA) target genes. May play a role in heterochromatin localization and condensation, and the siRNAi-directed trimethylation of 'Lys-9' of histone H3 in hermaphrodite X chromosomes. Promotes transgenerational epigenetic inheritance and germline immortality. This chain is ATPase morc-1, found in Caenorhabditis elegans.